The following is a 77-amino-acid chain: Acyl carrier protein (77 aa).

Residues methionine 1–glutamine 76 enclose the Carrier domain. Serine 36 bears the O-(pantetheine 4'-phosphoryl)serine mark.

It belongs to the acyl carrier protein (ACP) family. 4'-phosphopantetheine is transferred from CoA to a specific serine of apo-ACP by AcpS. This modification is essential for activity because fatty acids are bound in thioester linkage to the sulfhydryl of the prosthetic group.

It localises to the cytoplasm. The protein operates within lipid metabolism; fatty acid biosynthesis. Its function is as follows. Carrier of the growing fatty acid chain in fatty acid biosynthesis. The polypeptide is Acyl carrier protein (Campylobacter lari (strain RM2100 / D67 / ATCC BAA-1060)).